The chain runs to 684 residues: Gabija protein GajB (684 aa).

The UvrD-like helicase ATP-binding domain maps to 14 to 351 (EQKSINAIFN…IEVINKIRND (338 aa)). ATP is bound at residue 35-42 (SGAGAGKT).

Belongs to the helicase family. Homodimer. Interacts with GajA; 2 GajB dimers dock at opposite sides of the GajA complex to form a 4:4 GajA-GajB assembly (GajAB). GajAB interacts with Bacillus phage Phi3T Gad1 protein; this interaction forms a 4:4:8 GajAB-Gad1 complex and leads to GajAB inhibition.

In terms of biological role, component of antiviral defense system Gabija type II, composed of GajA and GajB. Expression of Gabija type II in B.subtilis (strain BEST7003) confers resistance to phages phi105, and SpBeta. May be a helicase or contribute to GajA activation. This is Gabija protein GajB from Bacillus cereus (strain HuB5-5).